The following is an 849-amino-acid chain: Rho guanine nucleotide exchange factor 15 (849 aa).

Disordered regions lie at residues 1-146, 159-202, and 277-308; these read MSAQ…ASAP, GAEG…NGTP, and LPPL…LPSE. Over residues 18-31 the composition is skewed to basic residues; it reads RIIRPRPPSRHRAP. The span at 48–59 shows a compositional bias: polar residues; that stretch reads QISNDASASVCT. Residues 65-110 are compositionally biased toward low complexity; that stretch reads PPTASLKPPALLPPSVSRTSLDSQTSPDSPSSTPSPSPVSRRSISP. A phosphoserine mark is found at S107 and S109. A compositionally biased stretch (pro residues) spans 111 to 123; the sequence is EPAPCSPVPPPKP. The segment covering 164 to 180 has biased composition (polar residues); sequence AQSSDSLERCSQGSTEV. At Y361 the chain carries Phosphotyrosine; by EPHB2. A DH domain is found at 425–609; it reads RMQESLFEVV…SKIIERCSAE (185 aa). 2 stretches are compositionally biased toward polar residues: residues 771-786 and 840-849; these read CSEP…QSLE and SSGTPDTPQP. Disordered stretches follow at residues 771–803 and 819–849; these read CSEP…GWLK and GEHE…TPQP.

In terms of assembly, interacts with EPHA4. Interacts with EPHB2. Post-translationally, phosphorylated on tyrosine residues upon EFNA1 stimulation. EPHB2-dependent phosphorylation at Tyr-361 triggers UBE3A-mediated ubiquitination. In terms of processing, ubiquitinated; UBE3A-mediated ubiquitination and degradation by the proteasome promotes EFNB1-dependent synapse formation. In terms of tissue distribution, at P12, expressed is detected in the CA1 region and the dentate gyrus of the hippocampus.

It localises to the cell projection. It is found in the dendrite. In terms of biological role, specific GEF for RhoA activation. Does not activate RAC1 or CDC42. Regulates vascular smooth muscle contractility. Negatively regulates excitatory synapse development by suppressing the synapse-promoting activity of EPHB2. The polypeptide is Rho guanine nucleotide exchange factor 15 (Arhgef15) (Mus musculus (Mouse)).